The chain runs to 57 residues: uncharacterized protein (57 aa).

Residues 10 to 27 (FGLLWLIIGSEAFHLNAL) traverse the membrane as a helical segment. Residues 28–55 (KQDHLERMKQYDAKIRLAKHEFDDTSNE) adopt a coiled-coil conformation.

It is found in the membrane. This is an uncharacterized protein from Schizosaccharomyces pombe (strain 972 / ATCC 24843) (Fission yeast).